A 361-amino-acid chain; its full sequence is Biotin synthase (361 aa).

One can recognise a Radical SAM core domain in the interval 63–290; the sequence is NTVQLSTLLS…RAMVRLSAGR (228 aa). Residues Cys78, Cys82, and Cys85 each coordinate [4Fe-4S] cluster. [2Fe-2S] cluster contacts are provided by Cys122, Cys153, Cys213, and Arg285.

It belongs to the radical SAM superfamily. Biotin synthase family. Homodimer. The cofactor is [4Fe-4S] cluster. It depends on [2Fe-2S] cluster as a cofactor.

The enzyme catalyses (4R,5S)-dethiobiotin + (sulfur carrier)-SH + 2 reduced [2Fe-2S]-[ferredoxin] + 2 S-adenosyl-L-methionine = (sulfur carrier)-H + biotin + 2 5'-deoxyadenosine + 2 L-methionine + 2 oxidized [2Fe-2S]-[ferredoxin]. The protein operates within cofactor biosynthesis; biotin biosynthesis; biotin from 7,8-diaminononanoate: step 2/2. In terms of biological role, catalyzes the conversion of dethiobiotin (DTB) to biotin by the insertion of a sulfur atom into dethiobiotin via a radical-based mechanism. This Paraburkholderia phytofirmans (strain DSM 17436 / LMG 22146 / PsJN) (Burkholderia phytofirmans) protein is Biotin synthase.